Consider the following 407-residue polypeptide: NAD(P)H-quinone oxidoreductase subunit 1 (407 aa).

9 consecutive transmembrane segments (helical) span residues Trp-28–Val-48, Trp-96–Ile-116, Ile-127–Met-147, Leu-175–Val-195, Leu-203–Ile-223, Leu-267–Pro-287, Ala-309–Leu-329, Trp-347–Leu-367, and Thr-374–Leu-394.

This sequence belongs to the complex I subunit 1 family. As to quaternary structure, NDH-1 is composed of at least 11 different subunits.

The protein resides in the cell inner membrane. It carries out the reaction a plastoquinone + NADH + (n+1) H(+)(in) = a plastoquinol + NAD(+) + n H(+)(out). It catalyses the reaction a plastoquinone + NADPH + (n+1) H(+)(in) = a plastoquinol + NADP(+) + n H(+)(out). Functionally, NDH-1 shuttles electrons from an unknown electron donor, via FMN and iron-sulfur (Fe-S) centers, to quinones in the respiratory and/or the photosynthetic chain. The immediate electron acceptor for the enzyme in this species is believed to be plastoquinone. Couples the redox reaction to proton translocation, and thus conserves the redox energy in a proton gradient. This Gloeobacter violaceus (strain ATCC 29082 / PCC 7421) protein is NAD(P)H-quinone oxidoreductase subunit 1.